The following is a 1126-amino-acid chain: Translation initiation factor IF-2 (1126 aa).

Positions 63–519 (LSINKPSIKK…TTRQRQKRRA (457 aa)) are disordered. Basic and acidic residues predominate over residues 70-83 (IKKDNFKQNKEDKS). Positions 93–111 (PLKNNSNKKPLLIKPLNKP) are enriched in low complexity. Residues 116-151 (KISNQLQNPNKPNIVNSSQSRANLTNTNSKPSQNFN) show a composition bias toward polar residues. Positions 161 to 171 (TPPPIKSPAKP) are enriched in pro residues. Positions 181–195 (NINNNVKSSESSQNI) are enriched in polar residues. 2 stretches are compositionally biased toward low complexity: residues 211–224 (NTNK…NNRK) and 240–252 (IINP…NKQN). Polar residues predominate over residues 254-264 (AFKQTASNRPG). 2 stretches are compositionally biased toward low complexity: residues 291–315 (NRQG…GLRN) and 327–349 (NRQG…NRPG). The span at 429-443 (GKTDWDDSAKLEALR) shows a compositional bias: basic and acidic residues. Residues 501–517 (KQFKKKKKETTRQRQKR) show a composition bias toward basic residues. One can recognise a tr-type G domain in the interval 618 to 790 (RRPPVITVMG…ILLVSDVEDL (173 aa)). The G1 stretch occupies residues 627–634 (GHVDHGKT). 627–634 (GHVDHGKT) provides a ligand contact to GTP. Positions 652 to 656 (GITQH) are G2. Residues 677–680 (DTPG) form a G3 region. Residues 677 to 681 (DTPGH) and 731 to 734 (NKID) each bind GTP. A G4 region spans residues 731–734 (NKID). A G5 region spans residues 767–769 (SAI).

It belongs to the TRAFAC class translation factor GTPase superfamily. Classic translation factor GTPase family. IF-2 subfamily.

It is found in the cytoplasm. Its function is as follows. One of the essential components for the initiation of protein synthesis. Protects formylmethionyl-tRNA from spontaneous hydrolysis and promotes its binding to the 30S ribosomal subunits. Also involved in the hydrolysis of GTP during the formation of the 70S ribosomal complex. The polypeptide is Translation initiation factor IF-2 (Prochlorococcus marinus (strain AS9601)).